A 56-amino-acid polypeptide reads, in one-letter code: Large ribosomal subunit protein bL33 (56 aa).

The protein belongs to the bacterial ribosomal protein bL33 family.

In Actinobacillus succinogenes (strain ATCC 55618 / DSM 22257 / CCUG 43843 / 130Z), this protein is Large ribosomal subunit protein bL33.